The primary structure comprises 461 residues: Bifunctional protein GlmU (461 aa).

Positions 1–229 (MEKYVVVLAA…FSESLGVNDR (229 aa)) are pyrophosphorylase. UDP-N-acetyl-alpha-D-glucosamine-binding positions include 8–11 (LAAG), Lys22, Gln72, and 77–78 (GT). Asp102 lines the Mg(2+) pocket. Residues Gly139, Glu154, Asn169, and Asn227 each coordinate UDP-N-acetyl-alpha-D-glucosamine. Residue Asn227 participates in Mg(2+) binding. The segment at 230–250 (VALAQATKTMQRRINEAHMRD) is linker. The segment at 251 to 461 (GVSFIDPDTA…LPLSKDKDWE (211 aa)) is N-acetyltransferase. UDP-N-acetyl-alpha-D-glucosamine is bound by residues Arg332 and Lys350. The active-site Proton acceptor is His362. UDP-N-acetyl-alpha-D-glucosamine-binding residues include Tyr365 and Asn376. Acetyl-CoA is bound by residues 385-386 (NY), Ala422, and Arg439.

This sequence in the N-terminal section; belongs to the N-acetylglucosamine-1-phosphate uridyltransferase family. It in the C-terminal section; belongs to the transferase hexapeptide repeat family. As to quaternary structure, homotrimer. It depends on Mg(2+) as a cofactor.

It localises to the cytoplasm. The enzyme catalyses alpha-D-glucosamine 1-phosphate + acetyl-CoA = N-acetyl-alpha-D-glucosamine 1-phosphate + CoA + H(+). The catalysed reaction is N-acetyl-alpha-D-glucosamine 1-phosphate + UTP + H(+) = UDP-N-acetyl-alpha-D-glucosamine + diphosphate. It participates in nucleotide-sugar biosynthesis; UDP-N-acetyl-alpha-D-glucosamine biosynthesis; N-acetyl-alpha-D-glucosamine 1-phosphate from alpha-D-glucosamine 6-phosphate (route II): step 2/2. The protein operates within nucleotide-sugar biosynthesis; UDP-N-acetyl-alpha-D-glucosamine biosynthesis; UDP-N-acetyl-alpha-D-glucosamine from N-acetyl-alpha-D-glucosamine 1-phosphate: step 1/1. It functions in the pathway bacterial outer membrane biogenesis; LPS lipid A biosynthesis. Its function is as follows. Catalyzes the last two sequential reactions in the de novo biosynthetic pathway for UDP-N-acetylglucosamine (UDP-GlcNAc). The C-terminal domain catalyzes the transfer of acetyl group from acetyl coenzyme A to glucosamine-1-phosphate (GlcN-1-P) to produce N-acetylglucosamine-1-phosphate (GlcNAc-1-P), which is converted into UDP-GlcNAc by the transfer of uridine 5-monophosphate (from uridine 5-triphosphate), a reaction catalyzed by the N-terminal domain. The polypeptide is Bifunctional protein GlmU (Lactobacillus helveticus (strain DPC 4571)).